The sequence spans 699 residues: Probable xyloglucan glycosyltransferase 12 (699 aa).

A run of 2 helical transmembrane segments spans residues 126–146 and 194–214; these read CLKV…AAYF and IVLF…CFWI. The active site involves Asp280. Substrate is bound by residues Asp339 and Asp341. Asp433 is an active-site residue. A run of 2 helical transmembrane segments spans residues 511–531 and 536–556; these read LILP…TMFV and LPAW…ILPA. Residues 616 to 646 form a disordered region; sequence EKTTKHQRGVSAPETEAEKKAEKTKRKKKKH. Glycyl lysine isopeptide (Lys-Gly) (interchain with G-Cter in ubiquitin) cross-links involve residues Lys617 and Lys620. Phosphoserine is present on Ser626. Residues 637-646 show a composition bias toward basic residues; sequence EKTKRKKKKH. 2 helical membrane-spanning segments follow: residues 649 to 668 and 674 to 694; these read IYMK…TRSL and IHFY…LDLI.

The protein belongs to the glycosyltransferase 2 family. Plant cellulose synthase-like C subfamily. Homodimer. Mainly expressed in roots, flowers and seeds, and, at very low levels, in seedlings, leaves and stems.

The protein resides in the golgi apparatus membrane. In terms of biological role, probable beta-1,4-glucan synthase rather involved in the synthesis of the xyloglucan backbone than cellulose. Seems to work simultaneously with xyloglucan 6-xylosyltransferase. Xyloglucan is a noncellulosic polysaccharides of plant cell wall and consists of a glucan backbone substituted by xylose, galactose and fucose. The sequence is that of Probable xyloglucan glycosyltransferase 12 from Arabidopsis thaliana (Mouse-ear cress).